The chain runs to 322 residues: MSKPGDYDAVRKDIIAQLKKPGYDDGSAGPVFVRLAWHSAGTYDLETDTGGSNGAGMRYEAEGGDPANAGLQHGRAFLEPVKEKHPWITYADLWTLAGVVAIEALGGPKVVWKPGRTDLVDDSKVPPRGRLPDATQGAEHLRAVFYRMGFNDQEIVALAGGHTLGRCHIDRSGFQGPWVNNPTRFSNQFFKLLLTLDWKPKTLPNGISQFVYVDPDAEEGDEPLMMLPTDIALKTDPAFRVWVDKYAADKDLFFDHFAKAFAKLMELGIKRDENDRVINADNVKGGYISAPKKSNHPTGPAKGAQGGCPVAASQGGCPRAKL.

The Proton acceptor role is filled by His38. His162 lines the heme b pocket. Catalysis depends on Trp178, which acts as the Tryptophan radical intermediate. A disordered region spans residues Ile288 to Leu322.

This sequence belongs to the peroxidase family. Cytochrome c peroxidase subfamily. Heme b is required as a cofactor.

Its function is as follows. Destroys radicals which are normally produced within the cells and which are toxic to biological systems. The protein is Putative heme-binding peroxidase of Aspergillus fumigatus (strain ATCC MYA-4609 / CBS 101355 / FGSC A1100 / Af293) (Neosartorya fumigata).